The sequence spans 386 residues: 5-hydroxytryptamine receptor 1B (386 aa).

The segment at 1 to 25 (MEEPGARCAPPPPAGSQTQTPSSNL) is disordered. Residues 1–42 (MEEPGARCAPPPPAGSQTQTPSSNLSHNCSADSYIYQDSIAL) lie on the Extracellular side of the membrane. Residues 16–25 (SQTQTPSSNL) are compositionally biased toward polar residues. Asn-24 and Asn-28 each carry an N-linked (GlcNAc...) asparagine glycan. The helical transmembrane segment at 43-68 (PWKVLLVALLALITLATTLSNAFVIA) threads the bilayer. The Cytoplasmic segment spans residues 69–82 (TVYRTRKLHTPANY). The chain crosses the membrane as a helical span at residues 83–107 (LIASLAVTDLLVSILVMPISTMYTV). The Extracellular portion of the chain corresponds to 108–115 (TGRWTLGQ). Residues 116-141 (VVCDFWLSSDITCCTASIMHLCVIAL) form a helical membrane-spanning segment. The cysteines at positions 118 and 195 are disulfide-linked. Ergotamine-binding residues include Asp-125 and Thr-130. Residues 142-144 (DRY) carry the DRY motif; important for ligand-induced conformation changes and signaling motif. Residues 142–161 (DRYWAITDAVEYSAKRTPRR) are Cytoplasmic-facing. A helical membrane pass occupies residues 162-180 (AAVMIALVWVFSISISLPR). Over 181–201 (FFWRQAKAEEEVLDCLVNTDH) the chain is Extracellular. Residue Val-197 participates in ergotamine binding. A helical transmembrane segment spans residues 202-225 (VLYTVYSTVGAFYLPTLLLIALYG). Residues 226 to 311 (RIYVEARSRI…AARERKATKT (86 aa)) are Cytoplasmic-facing. A disordered region spans residues 253–272 (ISDSPGSTSSVTSINSRVPD). Over residues 254–268 (SDSPGSTSSVTSINS) the composition is skewed to low complexity. Residues 312–333 (LGIILGAFIVCWLPFFIISLVM) form a helical membrane-spanning segment. Residues 334-343 (PICKDACWFH) lie on the Extracellular side of the membrane. Residues 344–366 (MAIFDFFNWLGYLNSLINPIIYT) form a helical membrane-spanning segment. An NPxxY motif; important for ligand-induced conformation changes and signaling motif is present at residues 361-365 (NPIIY). Residues 367–386 (MPNEDFKQAFHKLIRFKCTG) are Cytoplasmic-facing. A lipid anchor (S-palmitoyl cysteine) is attached at Cys-384.

Belongs to the G-protein coupled receptor 1 family. In terms of assembly, homodimer. Heterodimer with HTR1D. Post-translationally, phosphorylated. Desensitization of the receptor may be mediated by its phosphorylation. Palmitoylated.

The protein localises to the cell membrane. Its function is as follows. G-protein coupled receptor for 5-hydroxytryptamine (serotonin). Also functions as a receptor for ergot alkaloid derivatives, various anxiolytic and antidepressant drugs and other psychoactive substances, such as lysergic acid diethylamide (LSD). Ligand binding causes a conformation change that triggers signaling via guanine nucleotide-binding proteins (G proteins) and modulates the activity of downstream effectors, such as adenylate cyclase. HTR1B is coupled to G(i)/G(o) G alpha proteins and mediates inhibitory neurotransmission by inhibiting adenylate cyclase activity. Arrestin family members inhibit signaling via G proteins and mediate activation of alternative signaling pathways. Regulates the release of 5-hydroxytryptamine, dopamine and acetylcholine in the brain, and thereby affects neural activity, nociceptive processing, pain perception, mood and behavior. Besides, plays a role in vasoconstriction of cerebral arteries. The protein is 5-hydroxytryptamine receptor 1B (HTR1B) of Spalax ehrenbergi (Middle East blind mole rat).